The sequence spans 188 residues: MKLDVFAGQEISELSMIEVARAILEERGRDNDMYFSDLVNEIQNYLGKSDADIRYALPFFYTDLNTDGSFIPLGENKWGLRSWYAIDEIDEEIITLEDEEDGAPKRKKKRVNAFMDGDEDAIDYSADDPEDEDFVRESSDIEYDEEDPDDEKSEVESYDSELNEIIPEDDFEEVDLNEEDEEDEDEEE.

Positions 14–83 (LSMIEVARAI…GENKWGLRSW (70 aa)) constitute an HTH HARE-type domain. The segment at 119-188 (EDAIDYSADD…EDEEDEDEEE (70 aa)) is disordered.

It belongs to the RpoE family. As to quaternary structure, RNAP is composed of a core of 2 alpha, a beta and a beta' subunits. The core is associated with a delta subunit and one of several sigma factors.

Participates in both the initiation and recycling phases of transcription. In the presence of the delta subunit, RNAP displays an increased specificity of transcription, a decreased affinity for nucleic acids, and an increased efficiency of RNA synthesis because of enhanced recycling. This is Probable DNA-directed RNA polymerase subunit delta from Streptococcus equi subsp. zooepidemicus (strain H70).